The following is a 264-amino-acid chain: Small ribosomal subunit protein eS1 (264 aa).

The interval 232-264 (HGEGGGSGKPSGDETGAKVERADGYEPPVQESV) is disordered. The span at 242–255 (SGDETGAKVERADG) shows a compositional bias: basic and acidic residues.

It belongs to the eukaryotic ribosomal protein eS1 family. Component of the small ribosomal subunit. Mature ribosomes consist of a small (40S) and a large (60S) subunit. The 40S subunit contains about 33 different proteins and 1 molecule of RNA (18S). The 60S subunit contains about 49 different proteins and 3 molecules of RNA (28S, 5.8S and 5S). Part of the small subunit (SSU) processome, composed of more than 70 proteins and the RNA chaperone small nucleolar RNA (snoRNA) U3.

It localises to the cytoplasm. The protein resides in the nucleus. Its subcellular location is the nucleolus. Functionally, component of the small ribosomal subunit. The ribosome is a large ribonucleoprotein complex responsible for the synthesis of proteins in the cell. Part of the small subunit (SSU) processome, first precursor of the small eukaryotic ribosomal subunit. During the assembly of the SSU processome in the nucleolus, many ribosome biogenesis factors, an RNA chaperone and ribosomal proteins associate with the nascent pre-rRNA and work in concert to generate RNA folding, modifications, rearrangements and cleavage as well as targeted degradation of pre-ribosomal RNA by the RNA exosome. May play a role during erythropoiesis. The sequence is that of Small ribosomal subunit protein eS1 from Ophiophagus hannah (King cobra).